A 177-amino-acid polypeptide reads, in one-letter code: Pyruvate synthase subunit PorC (177 aa).

Heterotetramer of one alpha, one beta, one delta and one gamma chain.

The enzyme catalyses 2 oxidized [2Fe-2S]-[ferredoxin] + pyruvate + CoA = 2 reduced [2Fe-2S]-[ferredoxin] + acetyl-CoA + CO2 + H(+). The chain is Pyruvate synthase subunit PorC (porC) from Methanothermobacter marburgensis (strain ATCC BAA-927 / DSM 2133 / JCM 14651 / NBRC 100331 / OCM 82 / Marburg) (Methanobacterium thermoautotrophicum).